A 243-amino-acid polypeptide reads, in one-letter code: Probable transcriptional regulatory protein LCA_1307 (243 aa).

Residues 1 to 21 (MSGHSKWHNIQGRKNAQDAKR) form a disordered region.

The protein belongs to the TACO1 family.

The protein localises to the cytoplasm. In Latilactobacillus sakei subsp. sakei (strain 23K) (Lactobacillus sakei subsp. sakei), this protein is Probable transcriptional regulatory protein LCA_1307.